We begin with the raw amino-acid sequence, 579 residues long: Isocitrate dehydrogenase kinase/phosphatase (579 aa).

ATP-binding positions include 324 to 330 (ADGTPGM) and K345. The active site involves D380.

The protein belongs to the AceK family.

It is found in the cytoplasm. The catalysed reaction is L-seryl-[isocitrate dehydrogenase] + ATP = O-phospho-L-seryl-[isocitrate dehydrogenase] + ADP + H(+). Functionally, bifunctional enzyme which can phosphorylate or dephosphorylate isocitrate dehydrogenase (IDH) on a specific serine residue. This is a regulatory mechanism which enables bacteria to bypass the Krebs cycle via the glyoxylate shunt in response to the source of carbon. When bacteria are grown on glucose, IDH is fully active and unphosphorylated, but when grown on acetate or ethanol, the activity of IDH declines drastically concomitant with its phosphorylation. The polypeptide is Isocitrate dehydrogenase kinase/phosphatase (Xanthomonas campestris pv. campestris (strain 8004)).